The following is a 74-amino-acid chain: U-scoloptoxin(09)-Sm3a (74 aa).

A signal peptide spans 1 to 22 (MNANSIFLCFFIMLIGCTLTHS).

The protein belongs to the scoloptoxin-09 family. In terms of processing, contains 3 disulfide bonds. In terms of tissue distribution, expressed by the venom gland.

It is found in the secreted. This Scolopendra morsitans (Tanzanian blue ringleg centipede) protein is U-scoloptoxin(09)-Sm3a.